The following is a 638-amino-acid chain: MNNKLSDFEKNLYKKLKSGKLEVKVSYRTFLCPYCPDNKKKVGLYVDILQHASGVGNSQSKKRSLTEKASHRALAKYLIKDLAHYATSTISKRLKARTSFIPAETGDAPIIYDDAQFEKLVWPWKGVLVNIPTTSTEDGRSCTGESGPKLKDELIRRGFNPIRVRTVWDRFGHSGTGIVEFNRDWNGLQDALVFKKAYEGDGHGKKDWLCGATDSSLYAWLANADDYYRANILGENLRKMGDLKSIYRFAEEEARKDQKLLQRLNFMVENKQYRLKKLQIKYSQDSVKLKYETEEKEKILRAYSEDLTGRQQKSTDHFNRIFADHEKQKVQLESQIKELEIRKLELAKREAENETQRKIVAKELEQNAAINSYVQLSALEQQKTREKAQRLAVDHKMQKEKLHKRIAALERQLDQKQELELEVQQLKSQLSVMRLVELDSGSEIVNKVETFLRDLSETEGELAHLNQFNQDLVVQERKSNDELQEARRALISNLRDMGLHIGVKRMGELDTKPFMKAMRIKYCQEDLEDWAVEVIQLWEEYLKDPDWHPFKRIKLETAETIVEVIDEDDEKLRTLKNELGDDAYQAVANALLEINEYNPSGRYISSELWNFREDRKATLEEGVNSLLEQWNQAKHLKS.

A coiled-coil region spans residues 318-497; the sequence is FNRIFADHEK…RALISNLRDM (180 aa).

In terms of biological role, acts in association with FDM4 and FDM5 for RNA-directed DNA methylation (RdDM). This is Factor of DNA methylation 3 from Arabidopsis thaliana (Mouse-ear cress).